The primary structure comprises 306 residues: uncharacterized protein (306 aa).

The active-site Proton acceptor is the D204.

This sequence belongs to the aminoglycoside phosphotransferase family.

This is an uncharacterized protein from Bacillus subtilis (strain 168).